Reading from the N-terminus, the 917-residue chain is Protein translocase subunit SecA (917 aa).

ATP is bound by residues Q87, 105-109, and D516; that span reads GEGKT. 4 residues coordinate Zn(2+): C901, C903, C912, and H913.

This sequence belongs to the SecA family. In terms of assembly, monomer and homodimer. Part of the essential Sec protein translocation apparatus which comprises SecA, SecYEG and auxiliary proteins SecDF-YajC and YidC. The cofactor is Zn(2+).

The protein localises to the cell inner membrane. It is found in the cytoplasm. The catalysed reaction is ATP + H2O + cellular proteinSide 1 = ADP + phosphate + cellular proteinSide 2.. Its function is as follows. Part of the Sec protein translocase complex. Interacts with the SecYEG preprotein conducting channel. Has a central role in coupling the hydrolysis of ATP to the transfer of proteins into and across the cell membrane, serving both as a receptor for the preprotein-SecB complex and as an ATP-driven molecular motor driving the stepwise translocation of polypeptide chains across the membrane. This chain is Protein translocase subunit SecA, found in Acidovorax ebreus (strain TPSY) (Diaphorobacter sp. (strain TPSY)).